A 116-amino-acid chain; its full sequence is Ribosome-binding factor A (116 aa).

Belongs to the RbfA family. Monomer. Binds 30S ribosomal subunits, but not 50S ribosomal subunits or 70S ribosomes.

It localises to the cytoplasm. In terms of biological role, one of several proteins that assist in the late maturation steps of the functional core of the 30S ribosomal subunit. Associates with free 30S ribosomal subunits (but not with 30S subunits that are part of 70S ribosomes or polysomes). Required for efficient processing of 16S rRNA. May interact with the 5'-terminal helix region of 16S rRNA. The polypeptide is Ribosome-binding factor A (Ureaplasma urealyticum serovar 10 (strain ATCC 33699 / Western)).